Reading from the N-terminus, the 116-residue chain is Biogenesis of lysosome-related organelles complex 1 subunit CNL1 (116 aa).

Residues 63–95 (DIVDVNIQSFKDILSKCEELENYFTMLDQIEMI) are a coiled coil.

It belongs to the BLOC1S4 family. In terms of assembly, component of the biogenesis of lysosome-related organelles complex-1 (BLOC-1).

The protein localises to the cytoplasm. Functionally, component of the biogenesis of lysosome-related organelles complex-1 (BLOC-1), a complex that is involved in endosomal cargo sorting. In Vanderwaltozyma polyspora (strain ATCC 22028 / DSM 70294 / BCRC 21397 / CBS 2163 / NBRC 10782 / NRRL Y-8283 / UCD 57-17) (Kluyveromyces polysporus), this protein is Biogenesis of lysosome-related organelles complex 1 subunit CNL1 (CLN1).